Consider the following 690-residue polypeptide: MTTDSSDPAKPAGPGQPPGSGADTRPGGLATGQDVDPATIETDEDDEARLPDVPDEPTDAIAEGPLAVGRAAIEHAVRHAPTSPGVYRMMNAARDVLYVGKAKNVRKRLSSYARPTGQVMRIARMIAATSTIEIVSTETETEALLLEANLIKQLRPRFNVQLRDDKSFPYILITGDHWAPQILKHRGAQSRPGRYFGPFASAGAVGRTITALQRAFLVRSCTDSFFEGRTRPCLLYQIKRCAGPCTGEIDFPGYTALVREATDFLSGRSRAVKEELAREMEKASGDLAFERAALYRDRLAALSAIQSQQGINPRTVEEADVFAIHQEGGYSCVEVFFFRTGQNWGNRAYFPRAEKSFTPEEVLGAFLAQFYDDKPPPKVILLSHRIEESELLADALSIKAGHKVGVLMPQRGEKKELVAHALTNAREALGRKLADTATQSRLLQGLATVLGLPHAPRRIEVYDNSHIQGTNAVGAMIVAGPEGLLKNQYRKFNIRSENLTPGDDYAMMREVLERRFKRLLTQKAADPDKADEPEKDAVPQWPDLVIIDGGLGQLNAVRGIFDALGLSQVSLMAVAKGPDRDAGRETLFLPDRPAIKLEPRDPVLYFIQRLRDEAHRFVIGSHRKLRRKDIREAGLQEVPGIGPARKRALLHHFGTLKEIERASVADLGKVPGISAESARKIFDFFHTRPG.

The interval 1 to 60 (MTTDSSDPAKPAGPGQPPGSGADTRPGGLATGQDVDPATIETDEDDEARLPDVPDEPTDA) is disordered. Residues 41–58 (ETDEDDEARLPDVPDEPT) show a composition bias toward acidic residues. A GIY-YIG domain is found at 82-160 (TSPGVYRMMN…IKQLRPRFNV (79 aa)). Residues 270–305 (RAVKEELAREMEKASGDLAFERAALYRDRLAALSAI) form the UVR domain.

Belongs to the UvrC family. Interacts with UvrB in an incision complex.

It is found in the cytoplasm. Functionally, the UvrABC repair system catalyzes the recognition and processing of DNA lesions. UvrC both incises the 5' and 3' sides of the lesion. The N-terminal half is responsible for the 3' incision and the C-terminal half is responsible for the 5' incision. This Nitrobacter hamburgensis (strain DSM 10229 / NCIMB 13809 / X14) protein is UvrABC system protein C.